Here is a 541-residue protein sequence, read N- to C-terminus: Eukaryotic translation initiation factor 3 subunit D-1 (541 aa).

A disordered region spans residues Val98–Leu136. Positions Lys100–Asn120 are enriched in basic residues.

The protein belongs to the eIF-3 subunit D family. As to quaternary structure, component of the eukaryotic translation initiation factor 3 (eIF-3) complex. The eIF-3 complex interacts with pix.

The protein resides in the cytoplasm. MRNA cap-binding component of the eukaryotic translation initiation factor 3 (eIF-3) complex, which is involved in protein synthesis of a specialized repertoire of mRNAs and, together with other initiation factors, stimulates binding of mRNA and methionyl-tRNAi to the 40S ribosome. The eIF-3 complex specifically targets and initiates translation of a subset of mRNAs involved in cell proliferation. In the eIF-3 complex, eif3d specifically recognizes and binds the 7-methylguanosine cap of a subset of mRNAs. This Drosophila persimilis (Fruit fly) protein is Eukaryotic translation initiation factor 3 subunit D-1.